The sequence spans 129 residues: Glycine cleavage system H protein (129 aa).

The region spanning 24 to 106 is the Lipoyl-binding domain; sequence IAVIGITAYA…YGDGWLIKVR (83 aa). Lysine 65 bears the N6-lipoyllysine mark.

Belongs to the GcvH family. The glycine cleavage system is composed of four proteins: P, T, L and H. (R)-lipoate serves as cofactor.

Functionally, the glycine cleavage system catalyzes the degradation of glycine. The H protein shuttles the methylamine group of glycine from the P protein to the T protein. This chain is Glycine cleavage system H protein, found in Synechococcus sp. (strain JA-3-3Ab) (Cyanobacteria bacterium Yellowstone A-Prime).